A 228-amino-acid chain; its full sequence is Calcyclin-binding protein (228 aa).

Met-1 bears the N-acetylmethionine mark. N-acetylalanine is present on Ala-2. Residues 2–80 are interaction with SIAH1; that stretch reads ASEELQKDLE…YTVKISNYGW (79 aa). A Phosphoserine modification is found at Ser-3. An N6-acetyllysine mark is found at Lys-8 and Lys-19. Ser-34 bears the Phosphoserine mark. Residues 73 to 167 form the CS domain; sequence VKISNYGWDQ…VENTRWDYLT (95 aa). Positions 73–228 are interaction with SKP1; sequence VKISNYGWDQ…EKQAKGDTEF (156 aa). Lys-85 and Lys-118 each carry N6-acetyllysine. The interval 154–228 is interaction with S100A6; that stretch reads CRKKVENTRW…EKQAKGDTEF (75 aa). An SGS domain is found at 168–228; the sequence is QVEKECKEKE…EKQAKGDTEF (61 aa).

As to quaternary structure, homodimer. Interacts with proteins of the S100 family S100A1, S100A6, S100B, S100P and S100A12 in a calcium-dependent manner. Component of some large E3 complex at least composed of UBE2D1, SIAH1, CACYBP/SIP, SKP1, APC and TBL1X. Interacts directly with SIAH1, SIAH2 and SKP1. Post-translationally, phosphorylated on serine residues. Phosphorylated upon induction by RA or at high calcium concentrations.

It is found in the nucleus. The protein localises to the cytoplasm. In terms of biological role, may be involved in calcium-dependent ubiquitination and subsequent proteasomal degradation of target proteins. Probably serves as a molecular bridge in ubiquitin E3 complexes. Participates in the ubiquitin-mediated degradation of beta-catenin (CTNNB1). This is Calcyclin-binding protein (CACYBP) from Homo sapiens (Human).